The sequence spans 192 residues: Ribosome maturation factor RimM (192 aa).

In terms of domain architecture, PRC barrel spans 116–192; the sequence is PGEYYWVDLI…RIIVDWQPDY (77 aa).

It belongs to the RimM family. In terms of assembly, binds ribosomal protein uS19.

The protein localises to the cytoplasm. In terms of biological role, an accessory protein needed during the final step in the assembly of 30S ribosomal subunit, possibly for assembly of the head region. Essential for efficient processing of 16S rRNA. May be needed both before and after RbfA during the maturation of 16S rRNA. It has affinity for free ribosomal 30S subunits but not for 70S ribosomes. In Verminephrobacter eiseniae (strain EF01-2), this protein is Ribosome maturation factor RimM.